A 160-amino-acid chain; its full sequence is Leptin (160 aa).

A signal peptide spans 1–17; it reads MDYTLALALSLLQLSMC. A disulfide bridge connects residues Cys-109 and Cys-160.

It belongs to the leptin family.

It localises to the secreted. May function as part of a signaling pathway that acts to regulate the size of the body fat depot. The protein is Leptin (lep) of Tetraodon nigroviridis (Spotted green pufferfish).